The following is a 196-amino-acid chain: Pentatricopeptide repeat-containing protein At1g62350 (196 aa).

2 PPR repeats span residues 70 to 104 (DMFF…EVLF) and 105 to 139 (DQHT…PDRP).

Belongs to the PPR family. P subfamily.

The polypeptide is Pentatricopeptide repeat-containing protein At1g62350 (Arabidopsis thaliana (Mouse-ear cress)).